The sequence spans 436 residues: Probable glucose-6-phosphate isomerase (436 aa).

Glu-272 functions as the Proton donor in the catalytic mechanism. Residues His-293 and Lys-404 contribute to the active site.

Belongs to the GPI family.

It localises to the cytoplasm. The catalysed reaction is alpha-D-glucose 6-phosphate = beta-D-fructose 6-phosphate. It participates in carbohydrate biosynthesis; gluconeogenesis. It functions in the pathway carbohydrate degradation; glycolysis; D-glyceraldehyde 3-phosphate and glycerone phosphate from D-glucose: step 2/4. In terms of biological role, catalyzes the reversible isomerization of glucose-6-phosphate to fructose-6-phosphate. The sequence is that of Probable glucose-6-phosphate isomerase from Haloarcula marismortui (strain ATCC 43049 / DSM 3752 / JCM 8966 / VKM B-1809) (Halobacterium marismortui).